We begin with the raw amino-acid sequence, 208 residues long: MIVIIDYDTGNTKSISKALDFIGLQNKISSNKTEILQADGVILPGVGAYPEAMQELIRRGLDVTLKEIAVLRKPILGVCLGMQLLLESSNEHVFTRGLGLIPGYAEKLPDEPKFVIPHMGWNQLENKRITPLTKKVDGEYVYYVHSYYANCPPEYIIATSGYSVEIPGMINNGHIYGAQFHPEKSGQIGLEILKGFKEVIRSCKSSLQ.

Residues 1–206 enclose the Glutamine amidotransferase type-1 domain; the sequence is MIVIIDYDTG…KEVIRSCKSS (206 aa). The Nucleophile role is filled by C79. Active-site residues include H181 and E183.

As to quaternary structure, heterodimer of HisH and HisF.

The protein localises to the cytoplasm. The enzyme catalyses 5-[(5-phospho-1-deoxy-D-ribulos-1-ylimino)methylamino]-1-(5-phospho-beta-D-ribosyl)imidazole-4-carboxamide + L-glutamine = D-erythro-1-(imidazol-4-yl)glycerol 3-phosphate + 5-amino-1-(5-phospho-beta-D-ribosyl)imidazole-4-carboxamide + L-glutamate + H(+). It catalyses the reaction L-glutamine + H2O = L-glutamate + NH4(+). Its pathway is amino-acid biosynthesis; L-histidine biosynthesis; L-histidine from 5-phospho-alpha-D-ribose 1-diphosphate: step 5/9. Its function is as follows. IGPS catalyzes the conversion of PRFAR and glutamine to IGP, AICAR and glutamate. The HisH subunit catalyzes the hydrolysis of glutamine to glutamate and ammonia as part of the synthesis of IGP and AICAR. The resulting ammonia molecule is channeled to the active site of HisF. In Listeria welshimeri serovar 6b (strain ATCC 35897 / DSM 20650 / CCUG 15529 / CIP 8149 / NCTC 11857 / SLCC 5334 / V8), this protein is Imidazole glycerol phosphate synthase subunit HisH.